Here is a 226-residue protein sequence, read N- to C-terminus: Ribose-5-phosphate isomerase A (226 aa).

Substrate is bound by residues 26 to 29 (TGST), 82 to 85 (DGAD), and 95 to 98 (KGGG). The active-site Proton acceptor is the Glu-104. A substrate-binding site is contributed by Lys-122.

This sequence belongs to the ribose 5-phosphate isomerase family. Homodimer.

The catalysed reaction is aldehydo-D-ribose 5-phosphate = D-ribulose 5-phosphate. The protein operates within carbohydrate degradation; pentose phosphate pathway; D-ribose 5-phosphate from D-ribulose 5-phosphate (non-oxidative stage): step 1/1. Its function is as follows. Catalyzes the reversible conversion of ribose-5-phosphate to ribulose 5-phosphate. The chain is Ribose-5-phosphate isomerase A from Streptococcus uberis (strain ATCC BAA-854 / 0140J).